A 169-amino-acid polypeptide reads, in one-letter code: UPF0303 protein BOV_1367 (169 aa).

This sequence belongs to the UPF0303 family.

The polypeptide is UPF0303 protein BOV_1367 (Brucella ovis (strain ATCC 25840 / 63/290 / NCTC 10512)).